The following is a 325-amino-acid chain: Tetraacyldisaccharide 4'-kinase (325 aa).

55-62 lines the ATP pocket; it reads TAGGNGKT.

The protein belongs to the LpxK family.

It catalyses the reaction a lipid A disaccharide + ATP = a lipid IVA + ADP + H(+). It participates in glycolipid biosynthesis; lipid IV(A) biosynthesis; lipid IV(A) from (3R)-3-hydroxytetradecanoyl-[acyl-carrier-protein] and UDP-N-acetyl-alpha-D-glucosamine: step 6/6. Transfers the gamma-phosphate of ATP to the 4'-position of a tetraacyldisaccharide 1-phosphate intermediate (termed DS-1-P) to form tetraacyldisaccharide 1,4'-bis-phosphate (lipid IVA). This is Tetraacyldisaccharide 4'-kinase from Salmonella dublin (strain CT_02021853).